The chain runs to 156 residues: Arginine repressor (156 aa).

Belongs to the ArgR family.

Its subcellular location is the cytoplasm. Its pathway is amino-acid biosynthesis; L-arginine biosynthesis [regulation]. Regulates arginine biosynthesis genes. This chain is Arginine repressor, found in Shewanella baltica (strain OS223).